The primary structure comprises 248 residues: Small ribosomal subunit protein uS3 (248 aa).

Residues 38-106 (IREYLEKGLD…MVALNILEVK (69 aa)) form the KH type-2 domain. Positions 214 to 248 (SELNAPAQGRGRGDRNGRPRRGGQRRQRAQQKQEG) are disordered. Residues 231 to 242 (RPRRGGQRRQRA) are compositionally biased toward basic residues.

The protein belongs to the universal ribosomal protein uS3 family. As to quaternary structure, part of the 30S ribosomal subunit. Forms a tight complex with proteins S10 and S14.

Its function is as follows. Binds the lower part of the 30S subunit head. Binds mRNA in the 70S ribosome, positioning it for translation. In Corynebacterium aurimucosum (strain ATCC 700975 / DSM 44827 / CIP 107346 / CN-1) (Corynebacterium nigricans), this protein is Small ribosomal subunit protein uS3.